The following is a 278-amino-acid chain: Formyltetrahydrofolate deformylase (278 aa).

Residues 6 to 85 enclose the ACT domain; the sequence is ILLTDCPDDK…RLIGTQRKRI (80 aa). Residue D223 is part of the active site.

It belongs to the PurU family.

The catalysed reaction is (6R)-10-formyltetrahydrofolate + H2O = (6S)-5,6,7,8-tetrahydrofolate + formate + H(+). It participates in purine metabolism; IMP biosynthesis via de novo pathway; formate from 10-formyl-5,6,7,8-tetrahydrofolate: step 1/1. Its function is as follows. Catalyzes the hydrolysis of 10-formyltetrahydrofolate (formyl-FH4) to formate and tetrahydrofolate (FH4). This is Formyltetrahydrofolate deformylase from Haemophilus influenzae (strain ATCC 51907 / DSM 11121 / KW20 / Rd).